A 258-amino-acid chain; its full sequence is Indole-3-glycerol phosphate synthase (258 aa).

It belongs to the TrpC family.

It catalyses the reaction 1-(2-carboxyphenylamino)-1-deoxy-D-ribulose 5-phosphate + H(+) = (1S,2R)-1-C-(indol-3-yl)glycerol 3-phosphate + CO2 + H2O. The protein operates within amino-acid biosynthesis; L-tryptophan biosynthesis; L-tryptophan from chorismate: step 4/5. In Exiguobacterium sibiricum (strain DSM 17290 / CCUG 55495 / CIP 109462 / JCM 13490 / 255-15), this protein is Indole-3-glycerol phosphate synthase.